A 729-amino-acid chain; its full sequence is MSKFIEPSNEEIKLEKLYQDMGLSDKEYDKVVEILGREPNFTEVGIFSVMWSEHCSYKHSKPFLKQFPTTGEHVLMGPGEGAGVVDIGDNQAVVFKVESHNHPSAIEPYQGAATGVGGIIRDIVSIGARPINLLNSLRFGELTVKQNQRLLKGVVSGIGGYGNCIGIPTTAGEIEFDERYDGNPLVNAMCVGIIDHDMVQKGTAKGVGNSVIYVGLKTGRDGIHGATFASEELTEESESKRPSVQIGDPFVGKKLMEATLEAITFDELVGIQDMGAAGLTSSSSEMAAKGGSGLHLRLDQVPTREPGISPYEMMLSETQERMLLVVEKGTEQKFLDLFNKHELDSAVIGEVTDTDRFVLTYDDEVYADIPVQPLADEAPVYILEGEEKEYNTSKNDYSNIDVHDTFIKLLQHPTIASKHHLYEQYDQQVGANTIIKPGLQASVVRVEGTQKAIASTIDGEARYVFNQPYEGGKMVVAEAYRNLIAVGATPLAMTDCLNYGSPEKKEIYQQLIDSTKGMSEACKVLQTPVVSGNVSLYNETRGTSIFPTPVVGMVGLIEDVSYLKEFKPKAGDKIYLVGETRDDFGGSQLEKLLYGSVNHEFESIDLSDEVSKGKLIKQAIRNGIASHVQTVGKGGLLVTLAKISAHYDLGMQAQLDVTNAQLFSETQGRYIVVVKEGQTLDIDQAQEIGHLTHQQLFDISNSDVKMKENVSDIKQKWEGAIVQCLTTQD.

His54 is a catalytic residue. Residues Tyr57 and Lys96 each coordinate ATP. Glu98 provides a ligand contact to Mg(2+). Residues 99–102 and Arg121 each bind substrate; that span reads SHNH. The active-site Proton acceptor is the His100. Asp122 is a binding site for Mg(2+). A substrate-binding site is contributed by Gln245. Asp273 serves as a coordination point for Mg(2+). 317-319 contacts substrate; it reads ETQ. ATP contacts are provided by Asp495 and Gly532. Asn533 lines the Mg(2+) pocket. Position 535 (Ser535) interacts with substrate.

It belongs to the FGAMS family. Monomer. Part of the FGAM synthase complex composed of 1 PurL, 1 PurQ and 2 PurS subunits.

It localises to the cytoplasm. It catalyses the reaction N(2)-formyl-N(1)-(5-phospho-beta-D-ribosyl)glycinamide + L-glutamine + ATP + H2O = 2-formamido-N(1)-(5-O-phospho-beta-D-ribosyl)acetamidine + L-glutamate + ADP + phosphate + H(+). It functions in the pathway purine metabolism; IMP biosynthesis via de novo pathway; 5-amino-1-(5-phospho-D-ribosyl)imidazole from N(2)-formyl-N(1)-(5-phospho-D-ribosyl)glycinamide: step 1/2. Functionally, part of the phosphoribosylformylglycinamidine synthase complex involved in the purines biosynthetic pathway. Catalyzes the ATP-dependent conversion of formylglycinamide ribonucleotide (FGAR) and glutamine to yield formylglycinamidine ribonucleotide (FGAM) and glutamate. The FGAM synthase complex is composed of three subunits. PurQ produces an ammonia molecule by converting glutamine to glutamate. PurL transfers the ammonia molecule to FGAR to form FGAM in an ATP-dependent manner. PurS interacts with PurQ and PurL and is thought to assist in the transfer of the ammonia molecule from PurQ to PurL. The chain is Phosphoribosylformylglycinamidine synthase subunit PurL from Staphylococcus epidermidis (strain ATCC 35984 / DSM 28319 / BCRC 17069 / CCUG 31568 / BM 3577 / RP62A).